Here is a 559-residue protein sequence, read N- to C-terminus: S-layer protein (559 aa).

An N-terminal signal peptide occupies residues 1-28; it reads MAMSLKKIGAIAVGGAMVASALASGVMA. 5 N-linked (GlcNAc...) asparagine glycosylation sites follow: N108, N130, N155, N222, and N373.

It belongs to the Mj S-layer protein family.

The protein localises to the secreted. It localises to the cell wall. It is found in the S-layer. S-layer protein. The S-layer is a paracrystalline mono-layered assembly of proteins which coat the surface of the cell. This chain is S-layer protein, found in Methanothermococcus thermolithotrophicus (Methanococcus thermolithotrophicus).